The chain runs to 287 residues: tRNA pseudouridine synthase B (287 aa).

The Nucleophile role is filled by Asp37.

Belongs to the pseudouridine synthase TruB family. Type 1 subfamily.

The catalysed reaction is uridine(55) in tRNA = pseudouridine(55) in tRNA. Functionally, responsible for synthesis of pseudouridine from uracil-55 in the psi GC loop of transfer RNAs. The polypeptide is tRNA pseudouridine synthase B (Caldicellulosiruptor saccharolyticus (strain ATCC 43494 / DSM 8903 / Tp8T 6331)).